A 2514-amino-acid polypeptide reads, in one-letter code: Highly reducing polyketide synthase sphB (2514 aa).

A Ketosynthase family 3 (KS3) domain is found at 66-486 (QVPIAICGMA…GANAHVILES (421 aa)). Active-site for beta-ketoacyl synthase activity residues include cysteine 238, histidine 374, and histidine 409. A Malonyl-CoA:ACP transacylase (MAT) domain is found at 580–904 (MVFTGQGAQW…AIGALHSLNV (325 aa)). The tract at residues 950–1079 (HDLLGARVAE…GEVCAQSSAP (130 aa)) is N-terminal hotdog fold. In terms of domain architecture, PKS/mFAS DH spans 950-1240 (HDLLGARVAE…AADISDTHAA (291 aa)). Histidine 982 (proton acceptor; for dehydratase activity) is an active-site residue. The interval 1089-1240 (PRTLNVRKWY…AADISDTHAA (152 aa)) is C-terminal hotdog fold. Aspartate 1150 serves as the catalytic Proton donor; for dehydratase activity. The segment at 1319 to 1578 (WTGLDHEAIS…EPHQVTTTMV (260 aa)) is methyltransferase (CMet) domain. The region spanning 1779 to 2092 (GRVNSLHYAR…KGQHIGRVGV (314 aa)) is the Enoyl reductase (ER) domain. One can recognise a Ketoreductase (KR) domain in the interval 2120–2297 (ASYLMVGGLG…ASVVDMGAVE (178 aa)). In terms of domain architecture, Carrier spans 2427–2504 (EAAKLFAVEI…ILGQYAANEV (78 aa)). Position 2464 is an O-(pantetheine 4'-phosphoryl)serine (serine 2464).

Pantetheine 4'-phosphate serves as cofactor.

It catalyses the reaction holo-[ACP] + 8 malonyl-CoA + acetyl-CoA + 5 AH2 + 8 NADPH + 16 H(+) = (3R)-hydroxyoctadeca-4,10-dienoyl-[ACP] + 5 A + 8 CO2 + 8 NADP(+) + 9 CoA + 7 H2O. The protein operates within secondary metabolite biosynthesis. In terms of biological role, highly reducing polyketide synthase; part of the gene cluster that mediates the biosynthesis of sphingofungins, bioactive molecules acting as sphingolipid inhibitors via inhibiting serine palmitoyl transferase (SPT). Within the pathway, sphB catalyzes the first step of sphingofungin biosynthesis by condensing 8 units of malonyl-CoA with one starter unit of acetyl-CoA, leading to an C18 polyketide precursor 3-hydroxyoctadeca-4,10-dienoyl-ACP containing one delta-6 desaturation and one delta-12 desaturation. The PKS sphB does not contain any putative thioesterase domain for releasing the nascent polyketide chain and it has been suggested that aminoacyl transferases can facilitate the polyketide chain release. The aminoacyl transferase sphA uses the sphB product to produce 3-keto-presphingofungin by adding an aminomalonate molecule. SphF then reduces the C-3 ketone of 3-keto-presphingofungin which leads to presphingofungin. The cytochrome P450 monooxygenase sphH converts presphingofungin into sphingofungin B1 which is further converted to sphingofungin B by the dioxygenase sphC. SphC is also able to convert presphingofungin into sphingofungin B2. The acetyltransferase sphE acetylates sphingofungin B to produce sphingofungin C, but can also convert sphingofungin B1 into sphingofungin C1 and sphingofungin B2 into sphingofungin C2. Finally, sphingofungin C can be spontaneously converted into sphingofungin D. The polypeptide is Highly reducing polyketide synthase sphB (Aspergillus fumigatus (strain CBS 144.89 / FGSC A1163 / CEA10) (Neosartorya fumigata)).